A 185-amino-acid polypeptide reads, in one-letter code: Large ribosomal subunit protein bL12c (185 aa).

A chloroplast-targeting transit peptide spans 1–47 (MASTALSSAFSLLSLPSSSSPAAAAAAAPRSFAVPSRARPRRAVAVV).

This sequence belongs to the bacterial ribosomal protein bL12 family.

The protein resides in the plastid. It is found in the chloroplast. The sequence is that of Large ribosomal subunit protein bL12c (RPL12-2) from Oryza sativa subsp. japonica (Rice).